A 189-amino-acid chain; its full sequence is Probable chorismate pyruvate-lyase (189 aa).

Residues arginine 74, leucine 113, and glutamate 175 each coordinate substrate.

This sequence belongs to the UbiC family.

It localises to the cytoplasm. It catalyses the reaction chorismate = 4-hydroxybenzoate + pyruvate. It participates in cofactor biosynthesis; ubiquinone biosynthesis. Its function is as follows. Removes the pyruvyl group from chorismate, with concomitant aromatization of the ring, to provide 4-hydroxybenzoate (4HB) for the ubiquinone pathway. This Azoarcus sp. (strain BH72) protein is Probable chorismate pyruvate-lyase.